The chain runs to 182 residues: Probable nicotinate-nucleotide adenylyltransferase (182 aa).

It belongs to the NadD family.

The enzyme catalyses nicotinate beta-D-ribonucleotide + ATP + H(+) = deamido-NAD(+) + diphosphate. It functions in the pathway cofactor biosynthesis; NAD(+) biosynthesis; deamido-NAD(+) from nicotinate D-ribonucleotide: step 1/1. Catalyzes the reversible adenylation of nicotinate mononucleotide (NaMN) to nicotinic acid adenine dinucleotide (NaAD). The sequence is that of Probable nicotinate-nucleotide adenylyltransferase from Sulfurimonas denitrificans (strain ATCC 33889 / DSM 1251) (Thiomicrospira denitrificans (strain ATCC 33889 / DSM 1251)).